Here is a 418-residue protein sequence, read N- to C-terminus: Glutamyl-tRNA reductase (418 aa).

Substrate contacts are provided by residues 49–52 (TCNR), serine 107, 112–114 (EPQ), and glutamine 118. Cysteine 50 acts as the Nucleophile in catalysis. NADP(+) is bound at residue 187 to 192 (GAGETI).

This sequence belongs to the glutamyl-tRNA reductase family. As to quaternary structure, homodimer.

It carries out the reaction (S)-4-amino-5-oxopentanoate + tRNA(Glu) + NADP(+) = L-glutamyl-tRNA(Glu) + NADPH + H(+). The protein operates within porphyrin-containing compound metabolism; protoporphyrin-IX biosynthesis; 5-aminolevulinate from L-glutamyl-tRNA(Glu): step 1/2. Functionally, catalyzes the NADPH-dependent reduction of glutamyl-tRNA(Glu) to glutamate 1-semialdehyde (GSA). In Aeromonas salmonicida (strain A449), this protein is Glutamyl-tRNA reductase.